Here is a 661-residue protein sequence, read N- to C-terminus: Pseudouridylate synthase 7 homolog (661 aa).

Position 1 is an N-acetylmethionine (methionine 1). The interval 1–97 is disordered; sequence MEMTEMTGVS…GLSEECEEEE (97 aa). The residue at position 10 (serine 10) is a Phosphoserine. The segment covering 36-52 has biased composition (polar residues); the sequence is SECSLTKGQDGLQNDFL. Residues 77–97 show a composition bias toward acidic residues; the sequence is QLEDEEEEEEDGLSEECEEEE. A Phosphoserine modification is found at serine 127. The active-site Nucleophile is the aspartate 294. The TRUD domain maps to 370 to 580; sequence GFINYYGMQR…SGAYRKIIIR (211 aa). Threonine 610 carries the post-translational modification Phosphothreonine.

This sequence belongs to the pseudouridine synthase TruD family. Interacts with SIRT1.

The protein resides in the nucleus. The enzyme catalyses a uridine in tRNA = a pseudouridine in tRNA. It carries out the reaction uridine(13) in tRNA = pseudouridine(13) in tRNA. The catalysed reaction is a uridine in mRNA = a pseudouridine in mRNA. Its function is as follows. Pseudouridylate synthase that catalyzes pseudouridylation of RNAs. Acts as a regulator of protein synthesis in embryonic stem cells by mediating pseudouridylation of RNA fragments derived from tRNAs (tRFs): pseudouridylated tRFs inhibit translation by targeting the translation initiation complex. Also catalyzes pseudouridylation of mRNAs: mediates pseudouridylation of mRNAs with the consensus sequence 5'-UGUAG-3'. Acts as a regulator of pre-mRNA splicing by mediating pseudouridylation of pre-mRNAs at locations associated with alternatively spliced regions. Pseudouridylation of pre-mRNAs near splice sites directly regulates mRNA splicing and mRNA 3'-end processing. In addition to mRNAs and tRNAs, binds other types of RNAs, such as snRNAs, Y RNAs and vault RNAs, suggesting that it can catalyze pseudouridylation of many RNA types. In Homo sapiens (Human), this protein is Pseudouridylate synthase 7 homolog.